A 259-amino-acid polypeptide reads, in one-letter code: Proteasome subunit alpha type-7 (259 aa).

Belongs to the peptidase T1A family. In terms of assembly, the 26S proteasome consists of a 20S proteasome core and two 19S regulatory subunits. The 20S proteasome core is composed of 28 subunits that are arranged in four stacked rings, resulting in a barrel-shaped structure. The two end rings are each formed by seven alpha subunits, and the two central rings are each formed by seven beta subunits. The catalytic chamber with the active sites is on the inside of the barrel.

It localises to the cytoplasm. It is found in the nucleus. In terms of biological role, the proteasome is a multicatalytic proteinase complex which is characterized by its ability to cleave peptides with Arg, Phe, Tyr, Leu, and Glu adjacent to the leaving group at neutral or slightly basic pH. The proteasome has an ATP-dependent proteolytic activity. In Solanum lycopersicum (Tomato), this protein is Proteasome subunit alpha type-7 (PAD1).